We begin with the raw amino-acid sequence, 509 residues long: ATP synthase subunit alpha (509 aa).

ATP is bound at residue 169–176 (GDRQTGKT).

The protein belongs to the ATPase alpha/beta chains family. As to quaternary structure, F-type ATPases have 2 components, CF(1) - the catalytic core - and CF(0) - the membrane proton channel. CF(1) has five subunits: alpha(3), beta(3), gamma(1), delta(1), epsilon(1). CF(0) has three main subunits: a(1), b(2) and c(9-12). The alpha and beta chains form an alternating ring which encloses part of the gamma chain. CF(1) is attached to CF(0) by a central stalk formed by the gamma and epsilon chains, while a peripheral stalk is formed by the delta and b chains.

The protein localises to the cell inner membrane. The enzyme catalyses ATP + H2O + 4 H(+)(in) = ADP + phosphate + 5 H(+)(out). Its function is as follows. Produces ATP from ADP in the presence of a proton gradient across the membrane. The alpha chain is a regulatory subunit. In Rhizobium johnstonii (strain DSM 114642 / LMG 32736 / 3841) (Rhizobium leguminosarum bv. viciae), this protein is ATP synthase subunit alpha.